The primary structure comprises 279 residues: Type III pantothenate kinase (279 aa).

6 to 13 (DIGNTLSK) is an ATP binding site. Substrate-binding positions include Y92 and 99–102 (GVDR). The active-site Proton acceptor is D101. D120 is a K(+) binding site. S123 is a binding site for ATP. T177 is a binding site for substrate.

It belongs to the type III pantothenate kinase family. Homodimer. The cofactor is NH4(+). K(+) is required as a cofactor.

Its subcellular location is the cytoplasm. The enzyme catalyses (R)-pantothenate + ATP = (R)-4'-phosphopantothenate + ADP + H(+). It functions in the pathway cofactor biosynthesis; coenzyme A biosynthesis; CoA from (R)-pantothenate: step 1/5. Functionally, catalyzes the phosphorylation of pantothenate (Pan), the first step in CoA biosynthesis. This chain is Type III pantothenate kinase, found in Chromohalobacter salexigens (strain ATCC BAA-138 / DSM 3043 / CIP 106854 / NCIMB 13768 / 1H11).